The following is a 264-amino-acid chain: Glutamate racemase (264 aa).

Residues 10-11 (DS) and 42-43 (YG) contribute to the substrate site. C73 serves as the catalytic Proton donor/acceptor. 74 to 75 (NT) contributes to the substrate binding site. C183 serves as the catalytic Proton donor/acceptor. Position 184-185 (184-185 (TH)) interacts with substrate.

Belongs to the aspartate/glutamate racemases family.

It catalyses the reaction L-glutamate = D-glutamate. Its pathway is cell wall biogenesis; peptidoglycan biosynthesis. Functionally, provides the (R)-glutamate required for cell wall biosynthesis. The polypeptide is Glutamate racemase (Streptococcus uberis (strain ATCC BAA-854 / 0140J)).